The primary structure comprises 461 residues: Cysteine--tRNA ligase (461 aa).

A Zn(2+)-binding site is contributed by Cys-28. The 'HIGH' region signature appears at 30 to 40 (ITVYDLCHIGH). Zn(2+)-binding residues include Cys-209, His-234, and Glu-238. A 'KMSKS' region motif is present at residues 266–270 (KMSKS). Lys-269 contributes to the ATP binding site.

The protein belongs to the class-I aminoacyl-tRNA synthetase family. In terms of assembly, monomer. The cofactor is Zn(2+).

It is found in the cytoplasm. It catalyses the reaction tRNA(Cys) + L-cysteine + ATP = L-cysteinyl-tRNA(Cys) + AMP + diphosphate. The polypeptide is Cysteine--tRNA ligase (Escherichia coli O17:K52:H18 (strain UMN026 / ExPEC)).